A 449-amino-acid polypeptide reads, in one-letter code: Nucleoprotein (449 aa).

A disordered region spans residues 1–55; sequence MSFTPGKQSSSRASSGNRSGNGILKWADQSDQSRNVQTRGRRVQSKQTATSQQPS. A compositionally biased stretch (low complexity) spans 9 to 22; the sequence is SSSRASSGNRSGNG. Polar residues-rich tracts occupy residues 29–38 and 45–55; these read QSDQSRNVQT and SKQTATSQQPS. An RNA-binding region spans residues 52 to 194; it reads QQPSGGTVVP…GYYIEGSGRS (143 aa). A CoV N NTD domain is found at 61 to 190; it reads PYYSWFSGIT…VLPQGYYIEG (130 aa). R106, R122, and R164 together coordinate RNA. Disordered stretches follow at residues 158–231, 266–297, and 387–449; these read PADI…VTPD, ILNK…NFGG, and MMNI…TSEI. S167 carries the post-translational modification Phosphoserine; by host. T174 is modified (phosphothreonine; by host). S191 carries the phosphoserine; by host modification. Polar residues-rich tracts occupy residues 194 to 204 and 212 to 227; these read SAPNSRSTSRA and GSRS…STPG. The 126-residue stretch at 259–384 folds into the CoV N CTD domain; it reads AKEVRQKILN…QNLNAYQHQE (126 aa). Residues 266–276 show a composition bias toward basic residues; sequence ILNKPRQKRSP. A dimerization region spans residues 266 to 385; it reads ILNKPRQKRS…NLNAYQHQED (120 aa). S391 carries the phosphoserine; by host modification. Polar residues predominate over residues 400–410; that stretch reads QKNGQVENDNV. A compositionally biased stretch (basic and acidic residues) spans 423–440; that stretch reads KSRELTAEDISLLKKMDE. A Phosphoserine; by host modification is found at S424. T428 carries the phosphothreonine; by host modification.

The protein belongs to the betacoronavirus nucleocapsid protein family. In terms of assembly, homooligomer. Both monomeric and oligomeric forms interact with RNA. Interacts with protein M. Interacts with NSP3; this interaction serves to tether the genome to the newly translated replicase-transcriptase complex at a very early stage of infection. ADP-ribosylated. The ADP-ribosylation is retained in the virion during infection. Post-translationally, phosphorylated on serine and threonine residues.

It localises to the virion. The protein localises to the host endoplasmic reticulum-Golgi intermediate compartment. The protein resides in the host Golgi apparatus. Functionally, packages the positive strand viral genome RNA into a helical ribonucleocapsid (RNP) and plays a fundamental role during virion assembly through its interactions with the viral genome and membrane protein M. Plays an important role in enhancing the efficiency of subgenomic viral RNA transcription as well as viral replication. This Sus scrofa (Pig) protein is Nucleoprotein.